The sequence spans 347 residues: RNA 3'-terminal phosphate cyclase (347 aa).

ATP is bound by residues Q109 and 290–294 (YLADQ). H315 functions as the Tele-AMP-histidine intermediate in the catalytic mechanism.

Belongs to the RNA 3'-terminal cyclase family. Type 1 subfamily.

The protein resides in the cytoplasm. The enzyme catalyses a 3'-end 3'-phospho-ribonucleotide-RNA + ATP = a 3'-end 2',3'-cyclophospho-ribonucleotide-RNA + AMP + diphosphate. Its function is as follows. Catalyzes the conversion of 3'-phosphate to a 2',3'-cyclic phosphodiester at the end of RNA. The mechanism of action of the enzyme occurs in 3 steps: (A) adenylation of the enzyme by ATP; (B) transfer of adenylate to an RNA-N3'P to produce RNA-N3'PP5'A; (C) and attack of the adjacent 2'-hydroxyl on the 3'-phosphorus in the diester linkage to produce the cyclic end product. The biological role of this enzyme is unknown but it is likely to function in some aspects of cellular RNA processing. In Ralstonia nicotianae (strain ATCC BAA-1114 / GMI1000) (Ralstonia solanacearum), this protein is RNA 3'-terminal phosphate cyclase.